Here is a 341-residue protein sequence, read N- to C-terminus: Platelet-activating factor receptor (341 aa).

Over 1 to 16 the chain is Extracellular; sequence MEQNGSFRVDSEFRYT. The N-linked (GlcNAc...) asparagine glycan is linked to N4. Residues 17 to 38 traverse the membrane as a helical segment; sequence LFPIVYSVIFVLGVVANGYVLW. Over 39–54 the chain is Cytoplasmic; sequence VFATLYPSKKLNEIKI. Residues 55 to 74 traverse the membrane as a helical segment; it reads FMVNLTVADLLFLMTLPLWI. Over 75 to 91 the chain is Extracellular; that stretch reads VYYSNEGDWIVHKFLCN. C90 and C173 are joined by a disulfide. The chain crosses the membrane as a helical span at residues 92–113; that stretch reads LAGCLFFINTYCSVAFLGVITY. The Cytoplasmic portion of the chain corresponds to 114-133; the sequence is NRYQAVAYPIKTAQATTRKR. A helical membrane pass occupies residues 134–155; the sequence is GITLSLVIWISIAATASYFLAT. Over 156-184 the chain is Extracellular; it reads DSTNVVPKKDGSGNITRCFEHYEPYSVPI. N169 is a glycosylation site (N-linked (GlcNAc...) asparagine). A helical transmembrane segment spans residues 185–205; it reads LVVHIFITSCFFLVFFLIFYC. Over 206-233 the chain is Cytoplasmic; sequence NMVIIHTLLTRPVRQQRKPEVKRRALWM. A helical transmembrane segment spans residues 234-254; the sequence is VCTVLAVFVICFVPHHVVQLP. Residues 255-275 lie on the Extracellular side of the membrane; it reads WTLAELGYQTNFHQAINDAHQ. Residues 276–295 traverse the membrane as a helical segment; it reads ITLCLLSTNCVLDPVIYCFL. Over 296-341 the chain is Cytoplasmic; sequence TKKFRKHLSEKFYSMRSSRKCSRATSDTCTEVMMPANQTPVLPLKN.

The protein belongs to the G-protein coupled receptor 1 family. Interacts with ARRB1. Present in almost all organs including spleen, small intestine, kidney, lung, liver and brain.

It is found in the cell membrane. Its function is as follows. Receptor for platelet activating factor, a chemotactic phospholipid mediator that possesses potent inflammatory, smooth-muscle contractile and hypotensive activity. Seems to mediate its action via a G protein that activates a phosphatidylinositol-calcium second messenger system. The protein is Platelet-activating factor receptor (Ptafr) of Rattus norvegicus (Rat).